A 396-amino-acid chain; its full sequence is NADH-quinone oxidoreductase subunit D (396 aa).

Belongs to the complex I 49 kDa subunit family. In terms of assembly, NDH-1 is composed of 14 different subunits. Subunits NuoB, C, D, E, F, and G constitute the peripheral sector of the complex.

It is found in the cell inner membrane. The catalysed reaction is a quinone + NADH + 5 H(+)(in) = a quinol + NAD(+) + 4 H(+)(out). NDH-1 shuttles electrons from NADH, via FMN and iron-sulfur (Fe-S) centers, to quinones in the respiratory chain. The immediate electron acceptor for the enzyme in this species is believed to be ubiquinone. Couples the redox reaction to proton translocation (for every two electrons transferred, four hydrogen ions are translocated across the cytoplasmic membrane), and thus conserves the redox energy in a proton gradient. This Rhodopseudomonas palustris (strain BisB18) protein is NADH-quinone oxidoreductase subunit D.